The following is a 781-amino-acid chain: Dynamin-related protein dnm1 (781 aa).

One can recognise a Dynamin-type G domain in the interval 23-328 (FLDLPSIVVV…LVSHIRERLP (306 aa)). Positions 33–40 (GSQSCGKS) are G1 motif. 33-40 (GSQSCGKS) serves as a coordination point for GTP. The G2 motif stretch occupies residues 59–61 (VTR). Positions 76–103 (KNNHDEESTSDNNSEETSAAGETGSLEG) are disordered. The tract at residues 170–173 (DLPG) is G3 motif. GTP contacts are provided by residues 170–174 (DLPGL) and 239–242 (TKLD). The tract at residues 239 to 242 (TKLD) is G4 motif. The G5 motif stretch occupies residues 269–272 (VNRS). The GED domain occupies 694–781 (VDLIKELITS…QANKIISTVF (88 aa)).

The protein belongs to the TRAFAC class dynamin-like GTPase superfamily. Dynamin/Fzo/YdjA family.

It localises to the cytoplasm. It is found in the mitochondrion outer membrane. It carries out the reaction GTP + H2O = GDP + phosphate + H(+). Functionally, microtubule-associated force-producing protein that mediates mitochondrial fission during interphasic growth and at cell division. Fission of mitochondria occurs in many cell types and constitutes an important step in mitochondria morphology, which is balanced between fusion and fission. With vps1, acts redundantly in peroxisome biogenesis, which is under cell cycle control. This is Dynamin-related protein dnm1 (dnm1) from Schizosaccharomyces pombe (strain 972 / ATCC 24843) (Fission yeast).